Consider the following 393-residue polypeptide: Triacylglycerol lipase 1 (393 aa).

The first 20 residues, 1–20, serve as a signal peptide directing secretion; sequence MKWLLVAVLTSLTIFSALTQ. N-linked (GlcNAc...) asparagine glycosylation is present at Asn-41. Ser-166 (nucleophile) is an active-site residue. Asn-261 is a glycosylation site (N-linked (GlcNAc...) asparagine). Active-site charge relay system residues include Asp-334 and His-363.

The protein belongs to the AB hydrolase superfamily. Lipase family. Expressed in seedlings, roots, leaves, flowers and siliques. Specifically expressed in the epidermis.

It localises to the secreted. The enzyme catalyses a triacylglycerol + H2O = a diacylglycerol + a fatty acid + H(+). It carries out the reaction 1,2,3-tributanoylglycerol + H2O = dibutanoylglycerol + butanoate + H(+). It catalyses the reaction 1,2,3-trioctanoylglycerol + H2O = dioctanoylglycerol + octanoate + H(+). It functions in the pathway lipid metabolism; glycerolipid metabolism. Functionally, triacylglycerol (TAG) lipase active on triolein, trioctanoin, tributyrin and 1,3-Diolein, but not on phospho- and galactolipids. Involved but dispensable for TAG storage breakdown during seed germination. This Arabidopsis thaliana (Mouse-ear cress) protein is Triacylglycerol lipase 1.